A 154-amino-acid chain; its full sequence is UPF0178 protein YaiI (154 aa).

It belongs to the UPF0178 family.

This is UPF0178 protein YaiI from Escherichia coli (strain ATCC 8739 / DSM 1576 / NBRC 3972 / NCIMB 8545 / WDCM 00012 / Crooks).